The chain runs to 339 residues: Lipoate--protein ligase (339 aa).

The 191-residue stretch at Phe31–Gln221 folds into the BPL/LPL catalytic domain. ATP is bound by residues Arg73, Gly78–Tyr81, Lys135, and Ala139. Lys135 is a (R)-lipoate binding site.

Belongs to the LplA family.

The enzyme catalyses L-lysyl-[lipoyl-carrier protein] + (R)-lipoate + ATP = N(6)-[(R)-lipoyl]-L-lysyl-[lipoyl-carrier protein] + AMP + diphosphate + H(+). It functions in the pathway protein modification; protein lipoylation via exogenous pathway; protein N(6)-(lipoyl)lysine from lipoate: step 1/2. The protein operates within protein modification; protein lipoylation via exogenous pathway; protein N(6)-(lipoyl)lysine from lipoate: step 2/2. Catalyzes specifically the lipoylation of GcvH-L (SpyM50867), likely via the ATP-dependent activation of lipoate to lipoyl-AMP and the transfer of the activated lipoyl onto the lipoyl domain of the target protein. The polypeptide is Lipoate--protein ligase (Streptococcus pyogenes serotype M5 (strain Manfredo)).